A 1324-amino-acid chain; its full sequence is Tetratricopeptide repeat protein 21 homolog (1324 aa).

TPR repeat units lie at residues 58–91 (PALA…NDVA), 414–446 (SPLY…LVEM), 582–615 (SLYH…PRKE), 669–702 (DQLV…QSNF), 737–770 (PGSY…QSKD), 772–804 (QLAE…YKDK), 806–837 (MRLK…DPEP), 847–880 (IQFL…HSRI), 894–927 (ARIC…HETD), 929–961 (KANL…DPHN), 963–995 (EANS…NPQH), 997–1029 (HALS…NPRC), 1033–1066 (SGYN…AAGW), 1205–1238 (EKCW…NCNC), 1240–1272 (KAFE…TKER), and 1274–1307 (PGFG…NPQY).

This sequence belongs to the TTC21 family. As to quaternary structure, component of the IFT complex A (IFT-A) composed of at least che-11, daf-10, dyf-2, ift-139, ift-43 and ifta-1. Expressed in ciliated sensory neurons in the head and tail.

The protein resides in the cell projection. It is found in the cilium. The protein localises to the cytoplasm. It localises to the cytoskeleton. Its subcellular location is the cilium basal body. The protein resides in the dendrite. In terms of biological role, component of the IFT complex A (IFT-A), a complex required for retrograde ciliary transport. In particular, may act redundantly with the intraflagellar transport protein ift-43 to regulate the transport of specific ciliary cargo proteins such as che-3 which are related to motility. Functions in cilia biogenesis. This is Tetratricopeptide repeat protein 21 homolog from Caenorhabditis elegans.